We begin with the raw amino-acid sequence, 415 residues long: Heterogeneous nuclear ribonucleoprotein F (415 aa).

Met-1 is subject to N-acetylmethionine. The residue at position 2 (Met-2) is an N-acetylmethionine; in Heterogeneous nuclear ribonucleoprotein F, N-terminally processed. Residues 13–85 (VKLRGLPWSC…ESMGHRYIEV (73 aa)) form the RRM 1 domain. Lys-72 participates in a covalent cross-link: Glycyl lysine isopeptide (Lys-Gly) (interchain with G-Cter in SUMO). The interval 81-86 (RYIEVF) is interaction with RNA. Lys-87 participates in a covalent cross-link: Glycyl lysine isopeptide (Lys-Gly) (interchain with G-Cter in SUMO2). 3 positions are modified to phosphoserine: Ser-104, Ser-107, and Ser-161. Positions 111–188 (GFVRLRGLPF…RYIEVFKSSQ (78 aa)) constitute an RRM 2 domain. Lys-167 is covalently cross-linked (Glycyl lysine isopeptide (Lys-Gly) (interchain with G-Cter in SUMO2)). An interaction with RNA region spans residues 179 to 184 (RYIEVF). Lys-185 is covalently cross-linked (Glycyl lysine isopeptide (Lys-Gly) (interchain with G-Cter in SUMO2)). Residues Ser-187, Ser-193, and Ser-195 each carry the phosphoserine modification. Lys-200 carries the post-translational modification N6-acetyllysine; alternate. Residue Lys-200 forms a Glycyl lysine isopeptide (Lys-Gly) (interchain with G-Cter in SUMO2); alternate linkage. At Thr-215 the chain carries Phosphothreonine. At Lys-224 the chain carries N6-acetyllysine; alternate. Residue Lys-224 forms a Glycyl lysine isopeptide (Lys-Gly) (interchain with G-Cter in SUMO2); alternate linkage. Ser-265 carries the post-translational modification Phosphoserine. Positions 289–366 (HCVHMRGLPY…IELFLNSTTG (78 aa)) constitute an RRM 3 domain. The segment at 355-360 (RYIELF) is interaction with RNA.

Identified in the spliceosome C complex. Interacts with AGO1, AGO2, TBP and TXNL4/DIM1. Sumoylated.

It is found in the nucleus. The protein resides in the nucleoplasm. Functionally, component of the heterogeneous nuclear ribonucleoprotein (hnRNP) complexes which provide the substrate for the processing events that pre-mRNAs undergo before becoming functional, translatable mRNAs in the cytoplasm. Plays a role in the regulation of alternative splicing events. Binds G-rich sequences in pre-mRNAs and keeps target RNA in an unfolded state. This chain is Heterogeneous nuclear ribonucleoprotein F (HNRNPF), found in Macaca fascicularis (Crab-eating macaque).